A 180-amino-acid polypeptide reads, in one-letter code: UPF0227 protein YcfP (180 aa).

The protein belongs to the UPF0227 family.

The sequence is that of UPF0227 protein YcfP from Escherichia coli O139:H28 (strain E24377A / ETEC).